A 225-amino-acid chain; its full sequence is Uracil-DNA glycosylase (225 aa).

Aspartate 65 serves as the catalytic Proton acceptor.

The protein belongs to the uracil-DNA glycosylase (UDG) superfamily. UNG family.

The protein localises to the cytoplasm. The enzyme catalyses Hydrolyzes single-stranded DNA or mismatched double-stranded DNA and polynucleotides, releasing free uracil.. In terms of biological role, excises uracil residues from the DNA which can arise as a result of misincorporation of dUMP residues by DNA polymerase or due to deamination of cytosine. This Anoxybacillus flavithermus (strain DSM 21510 / WK1) protein is Uracil-DNA glycosylase.